The primary structure comprises 274 residues: Basic leucine zipper transcriptional factor ATF-like 2 (274 aa).

3 disordered regions span residues 1–47 (MHLC…ALHQ), 128–151 (GSCY…LLQC), and 187–229 (GSSS…PSSA). The bZIP domain maps to 17–80 (EQQRQLKKQK…AWWSRTLHVH (64 aa)). A basic motif region spans residues 20–41 (RQLKKQKNRAAAQRSRQKHTDK). A compositionally biased stretch (basic and acidic residues) spans 37-47 (KHTDKADALHQ). Residues 45 to 66 (LHQQHESLEKDNLALRKEIQSL) form a leucine-zipper region. Residues 187-196 (GSSSKLSALQ) show a composition bias toward low complexity.

The protein belongs to the bZIP family. In terms of assembly, heterodimer; heterodimerizes with JUN family proteins.

It is found in the nucleus. Its function is as follows. AP-1 family transcription factor that controls the differentiation of lineage-specific cells in the immune system. Following infection, participates in the differentiation of CD8(+) thymic conventional dendritic cells in the immune system. Acts via the formation of a heterodimer with JUN family proteins that recognizes and binds DNA sequence 5'-TGA[CG]TCA-3' and regulates expression of target genes. Selectively suppresses CCN1 transcription and hence blocks the downstream cell proliferation signals produced by CCN1 and inhibits CCN1-induced anchorage-independent growth and invasion in several cancer types, such as breast cancer, malignant glioma and metastatic melanoma. Possibly acts by interfering with AP-1 binding to CCN1 promoter. This is Basic leucine zipper transcriptional factor ATF-like 2 (BATF2) from Homo sapiens (Human).